We begin with the raw amino-acid sequence, 669 residues long: Protein ENTREP3 (669 aa).

3 helical membrane passes run 34–54 (LLTLGLAQVLLGILVITFSMV), 67–87 (SCPSWAGFSLAFSGLVGIVSW), and 91–111 (FTLVISFFSLLSVLCVMLSMA). Residue Asn-160 is glycosylated (N-linked (GlcNAc...) asparagine). Residues 174-194 (LFSVCGLTICAAIICTLSAIV) traverse the membrane as a helical segment. Phosphoserine is present on residues Ser-359 and Ser-390. Disordered regions lie at residues 387–420 (FEDSPLPRRPPRAARSYSCSAPEAPPPLGAPTAA), 445–502 (PRGG…TTSS), and 550–571 (RSAEKRRPVPTFQKVPLPSGPT). Low complexity predominate over residues 399-408 (AARSYSCSAP). Ser-494 carries the post-translational modification Phosphoserine. At Ser-575 the chain carries Phosphoserine. Residues 597–624 (RRSPDPTGTGAHGYKQVRRSPWGRPGRE) are disordered.

Belongs to the ENTREP family. As to quaternary structure, may interact with WWOX.

It is found in the membrane. This chain is Protein ENTREP3, found in Mus musculus (Mouse).